The primary structure comprises 215 residues: Pyridoxine/pyridoxamine 5'-phosphate oxidase (215 aa).

Residues 9 to 12 (RRDY) and lysine 69 each bind substrate. Residues 64–69 (RVLLLK), 79–80 (FS), lysine 86, and glutamine 108 contribute to the FMN site. Residues tyrosine 126, arginine 130, and serine 134 each contribute to the substrate site. FMN is bound by residues 143 to 144 (QS) and tryptophan 188. Residue 194–196 (RLH) coordinates substrate. FMN is bound at residue arginine 198.

It belongs to the pyridoxamine 5'-phosphate oxidase family. As to quaternary structure, homodimer. Requires FMN as cofactor.

It catalyses the reaction pyridoxamine 5'-phosphate + O2 + H2O = pyridoxal 5'-phosphate + H2O2 + NH4(+). The enzyme catalyses pyridoxine 5'-phosphate + O2 = pyridoxal 5'-phosphate + H2O2. It functions in the pathway cofactor metabolism; pyridoxal 5'-phosphate salvage; pyridoxal 5'-phosphate from pyridoxamine 5'-phosphate: step 1/1. It participates in cofactor metabolism; pyridoxal 5'-phosphate salvage; pyridoxal 5'-phosphate from pyridoxine 5'-phosphate: step 1/1. Its function is as follows. Catalyzes the oxidation of either pyridoxine 5'-phosphate (PNP) or pyridoxamine 5'-phosphate (PMP) into pyridoxal 5'-phosphate (PLP). This Ectopseudomonas mendocina (strain ymp) (Pseudomonas mendocina) protein is Pyridoxine/pyridoxamine 5'-phosphate oxidase.